We begin with the raw amino-acid sequence, 300 residues long: Ribosomal RNA small subunit methyltransferase H (300 aa).

S-adenosyl-L-methionine-binding positions include 46–48, aspartate 65, phenylalanine 92, aspartate 107, and glutamine 114; that span reads GGH.

The protein belongs to the methyltransferase superfamily. RsmH family.

Its subcellular location is the cytoplasm. It catalyses the reaction cytidine(1402) in 16S rRNA + S-adenosyl-L-methionine = N(4)-methylcytidine(1402) in 16S rRNA + S-adenosyl-L-homocysteine + H(+). Specifically methylates the N4 position of cytidine in position 1402 (C1402) of 16S rRNA. The polypeptide is Ribosomal RNA small subunit methyltransferase H (Prochlorococcus marinus (strain MIT 9312)).